The sequence spans 98 residues: Large ribosomal subunit protein bL25 (98 aa).

The segment at 1 to 23 (MANFVLNAQARAEDKQGKGASRR) is disordered.

Belongs to the bacterial ribosomal protein bL25 family. Part of the 50S ribosomal subunit; part of the 5S rRNA/L5/L18/L25 subcomplex. Contacts the 5S rRNA. Binds to the 5S rRNA independently of L5 and L18.

Its function is as follows. This is one of the proteins that binds to the 5S RNA in the ribosome where it forms part of the central protuberance. The sequence is that of Large ribosomal subunit protein bL25 from Acinetobacter baumannii (strain AB307-0294).